Consider the following 230-residue polypeptide: ATP synthase subunit a (230 aa).

6 consecutive transmembrane segments (helical) span residues 26-46, 83-103, 112-132, 143-163, 182-202, and 203-223; these read ANAVVYTWTVIVLLLVLSLIA, FFPLIATLAIFILVSNLVGLI, NVNTTAACAIVVFLATHVVGI, FMGPIWWLAPLMFFIEVIGHL, LVLMIFFALAPFLVPLPMMLM, and GVLVSFIQAFVFMLLAMIYIQ.

Belongs to the ATPase A chain family. As to quaternary structure, F-type ATPases have 2 components, CF(1) - the catalytic core - and CF(0) - the membrane proton channel. CF(1) has five subunits: alpha(3), beta(3), gamma(1), delta(1), epsilon(1). CF(0) has three main subunits: a(1), b(2) and c(9-12). The alpha and beta chains form an alternating ring which encloses part of the gamma chain. CF(1) is attached to CF(0) by a central stalk formed by the gamma and epsilon chains, while a peripheral stalk is formed by the delta and b chains.

The protein resides in the cell inner membrane. Key component of the proton channel; it plays a direct role in the translocation of protons across the membrane. In Trichlorobacter lovleyi (strain ATCC BAA-1151 / DSM 17278 / SZ) (Geobacter lovleyi), this protein is ATP synthase subunit a.